The chain runs to 571 residues: Proline--tRNA ligase (571 aa).

The protein belongs to the class-II aminoacyl-tRNA synthetase family. ProS type 1 subfamily. Homodimer.

Its subcellular location is the cytoplasm. The enzyme catalyses tRNA(Pro) + L-proline + ATP = L-prolyl-tRNA(Pro) + AMP + diphosphate. Catalyzes the attachment of proline to tRNA(Pro) in a two-step reaction: proline is first activated by ATP to form Pro-AMP and then transferred to the acceptor end of tRNA(Pro). As ProRS can inadvertently accommodate and process non-cognate amino acids such as alanine and cysteine, to avoid such errors it has two additional distinct editing activities against alanine. One activity is designated as 'pretransfer' editing and involves the tRNA(Pro)-independent hydrolysis of activated Ala-AMP. The other activity is designated 'posttransfer' editing and involves deacylation of mischarged Ala-tRNA(Pro). The misacylated Cys-tRNA(Pro) is not edited by ProRS. The protein is Proline--tRNA ligase of Ectopseudomonas mendocina (strain ymp) (Pseudomonas mendocina).